Reading from the N-terminus, the 102-residue chain is Cytochrome b (102 aa).

3 consecutive transmembrane segments (helical) span residues 1-21 (FGSLLGLCLATQILTGLFLAM), 45-66 (WLIRNIHANGASFFFICIYLHI), and 81-101 (WNIGVVLLLLVMMTAFVGYVL). The heme b site is built by H51 and H65.

It belongs to the cytochrome b family. The cytochrome bc1 complex contains 3 respiratory subunits (MT-CYB, CYC1 and UQCRFS1), 2 core proteins (UQCRC1 and UQCRC2) and probably 6 low-molecular weight proteins. The cofactor is heme b.

It localises to the mitochondrion inner membrane. Its function is as follows. Component of the ubiquinol-cytochrome c reductase complex (complex III or cytochrome b-c1 complex) that is part of the mitochondrial respiratory chain. The b-c1 complex mediates electron transfer from ubiquinol to cytochrome c. Contributes to the generation of a proton gradient across the mitochondrial membrane that is then used for ATP synthesis. This Megalops atlanticus (Tarpon) protein is Cytochrome b (mt-cyb).